Reading from the N-terminus, the 239-residue chain is MQKLELLYEGKAKRIYRTESADMVWVEYKDSATAFNGEKKETITGKGRLNNEITTLLFRKLQEVGIKTHFVEKLSETEQLVKKVSIIPLEVVTRNVIAGSLSKRLGMEEGTVLAEPIVEFYFKDDDLGDPLVTEDHIRVLNVASPEQVSVLRDMALQINQVLIDHFASCRVRLVDFKLEFGVTEEGEIILADEISPDTCRLWDETSNEKFDKDVFRRDLGNLTDAYEEILKRLGGISHV.

This sequence belongs to the SAICAR synthetase family.

It carries out the reaction 5-amino-1-(5-phospho-D-ribosyl)imidazole-4-carboxylate + L-aspartate + ATP = (2S)-2-[5-amino-1-(5-phospho-beta-D-ribosyl)imidazole-4-carboxamido]succinate + ADP + phosphate + 2 H(+). The protein operates within purine metabolism; IMP biosynthesis via de novo pathway; 5-amino-1-(5-phospho-D-ribosyl)imidazole-4-carboxamide from 5-amino-1-(5-phospho-D-ribosyl)imidazole-4-carboxylate: step 1/2. This Bacillus cereus (strain B4264) protein is Phosphoribosylaminoimidazole-succinocarboxamide synthase.